A 718-amino-acid polypeptide reads, in one-letter code: Putative methyltransferase NSUN7 (718 aa).

The Nucleophile role is filled by cysteine 439. Disordered stretches follow at residues 536–557 (GKSSKREKKKKKSKTSLTKGAT), 578–616 (ANLSETVTKPPLPQKNTAQVGASSQTRKPNKLAPHPAVP), and 694–718 (SLSRKEEKPKDDTPSSLLRPPRRWL). Positions 538–549 (SSKREKKKKKSK) are enriched in basic residues. A compositionally biased stretch (polar residues) spans 591–604 (QKNTAQVGASSQTR). A compositionally biased stretch (basic and acidic residues) spans 696 to 706 (SRKEEKPKDDT).

It belongs to the class I-like SAM-binding methyltransferase superfamily. RsmB/NOP family.

In terms of biological role, may have S-adenosyl-L-methionine-dependent methyl-transferase activity. This is Putative methyltransferase NSUN7 (NSUN7) from Homo sapiens (Human).